A 173-amino-acid polypeptide reads, in one-letter code: Photosystem I assembly protein Ycf3 (173 aa).

TPR repeat units follow at residues 35–68, 72–105, and 120–153; these read AFSYYRDGMSAQSEGEYAEALENYYEALKLEEDP, SYILYNIGLIYASNGEYIKALEYYHQGLELNFKL, and GVQAVEEKNIELSKLMFDKAAQYWQQAIKLAPDN.

It belongs to the Ycf3 family.

It is found in the plastid. Its subcellular location is the chloroplast thylakoid membrane. Functionally, essential for the assembly of the photosystem I (PSI) complex. May act as a chaperone-like factor to guide the assembly of the PSI subunits. The protein is Photosystem I assembly protein Ycf3 of Porphyra purpurea (Red seaweed).